A 375-amino-acid polypeptide reads, in one-letter code: ORC1-type DNA replication protein 3 (375 aa).

ATP contacts are provided by residues 66 to 70 (TGKTT), Y209, and R221.

Belongs to the CDC6/cdc18 family.

Its function is as follows. Involved in regulation of DNA replication. The sequence is that of ORC1-type DNA replication protein 3 (cdc6c) from Haloarcula marismortui (strain ATCC 43049 / DSM 3752 / JCM 8966 / VKM B-1809) (Halobacterium marismortui).